The chain runs to 285 residues: Bis(5'-nucleosyl)-tetraphosphatase, symmetrical (285 aa).

It belongs to the Ap4A hydrolase family.

The enzyme catalyses P(1),P(4)-bis(5'-adenosyl) tetraphosphate + H2O = 2 ADP + 2 H(+). Functionally, hydrolyzes diadenosine 5',5'''-P1,P4-tetraphosphate to yield ADP. This is Bis(5'-nucleosyl)-tetraphosphatase, symmetrical from Pseudomonas entomophila (strain L48).